Here is a 386-residue protein sequence, read N- to C-terminus: Succinate--CoA ligase [ADP-forming] subunit beta (386 aa).

Residues 9 to 244 form the ATP-grasp domain; that stretch reads KEILRNFGVP…LDEEDPAEVE (236 aa). ATP is bound by residues lysine 46, 53–55, glutamate 99, alanine 102, and glutamate 107; that span reads GRG. Mg(2+)-binding residues include asparagine 199 and aspartate 213. Substrate is bound by residues asparagine 264 and 321-323; that span reads GIM.

It belongs to the succinate/malate CoA ligase beta subunit family. As to quaternary structure, heterotetramer of two alpha and two beta subunits. Mg(2+) serves as cofactor.

The catalysed reaction is succinate + ATP + CoA = succinyl-CoA + ADP + phosphate. It carries out the reaction GTP + succinate + CoA = succinyl-CoA + GDP + phosphate. It functions in the pathway carbohydrate metabolism; tricarboxylic acid cycle; succinate from succinyl-CoA (ligase route): step 1/1. In terms of biological role, succinyl-CoA synthetase functions in the citric acid cycle (TCA), coupling the hydrolysis of succinyl-CoA to the synthesis of either ATP or GTP and thus represents the only step of substrate-level phosphorylation in the TCA. The beta subunit provides nucleotide specificity of the enzyme and binds the substrate succinate, while the binding sites for coenzyme A and phosphate are found in the alpha subunit. The sequence is that of Succinate--CoA ligase [ADP-forming] subunit beta from Polaromonas naphthalenivorans (strain CJ2).